The chain runs to 101 residues: Urease subunit gamma (101 aa).

This sequence belongs to the urease gamma subunit family. As to quaternary structure, heterotrimer of UreA (gamma), UreB (beta) and UreC (alpha) subunits. Three heterotrimers associate to form the active enzyme.

Its subcellular location is the cytoplasm. The catalysed reaction is urea + 2 H2O + H(+) = hydrogencarbonate + 2 NH4(+). It participates in nitrogen metabolism; urea degradation; CO(2) and NH(3) from urea (urease route): step 1/1. The protein is Urease subunit gamma of Ureaplasma urealyticum (Ureaplasma urealyticum biotype 2).